A 525-amino-acid chain; its full sequence is CBL-interacting protein kinase 21 (525 aa).

Positions 87–342 (YEMGRALGEG…ITGIRAHEWF (256 aa)) constitute a Protein kinase domain. ATP is bound by residues 93-101 (LGEGHFGKV) and Lys-116. Residue Asp-210 is the Proton acceptor of the active site. The segment at 228 to 257 (DFGLSALPQNQRKDGLLHTTCGSPNYIAPE) is activation loop. The 30-residue stretch at 372-401 (DIETSPAISQINAFQLIGMSSCLDLSGFFE) folds into the NAF domain. The interval 407 to 436 (ERKIRFVSNYSPTSLFEKIESTVTEKGFQV) is PPI.

Belongs to the protein kinase superfamily. CAMK Ser/Thr protein kinase family. SNF1 subfamily. It depends on Mn(2+) as a cofactor.

The enzyme catalyses L-seryl-[protein] + ATP = O-phospho-L-seryl-[protein] + ADP + H(+). It carries out the reaction L-threonyl-[protein] + ATP = O-phospho-L-threonyl-[protein] + ADP + H(+). Its function is as follows. CIPK serine-threonine protein kinases interact with CBL proteins. Binding of a CBL protein to the regulatory NAF domain of CIPK protein lead to the activation of the kinase in a calcium-dependent manner. The protein is CBL-interacting protein kinase 21 (CIPK21) of Oryza sativa subsp. japonica (Rice).